The sequence spans 301 residues: Ribonuclease HIII (301 aa).

The region spanning 84-301 is the RNase H type-2 domain; that stretch reads ASAIGSDEVG…TEKAARIAKK (218 aa). A divalent metal cation is bound by residues Asp90, Glu91, and Asp195.

Belongs to the RNase HII family. RnhC subfamily. Mn(2+) is required as a cofactor. Mg(2+) serves as cofactor.

Its subcellular location is the cytoplasm. It catalyses the reaction Endonucleolytic cleavage to 5'-phosphomonoester.. Its function is as follows. Endonuclease that specifically degrades the RNA of RNA-DNA hybrids. In Geobacillus sp. (strain WCH70), this protein is Ribonuclease HIII.